The following is a 119-amino-acid chain: Large ribosomal subunit protein bL20 (119 aa).

It belongs to the bacterial ribosomal protein bL20 family.

Binds directly to 23S ribosomal RNA and is necessary for the in vitro assembly process of the 50S ribosomal subunit. It is not involved in the protein synthesizing functions of that subunit. This chain is Large ribosomal subunit protein bL20, found in Nitrobacter winogradskyi (strain ATCC 25391 / DSM 10237 / CIP 104748 / NCIMB 11846 / Nb-255).